The primary structure comprises 187 residues: MIVLGVDPGSVHTGYGVVLCNGQKFSLVACGLIRLSSNQSIADRIKIIYDELGAIIAEYNPQRLALETAYVNRNPQSALKLGQVRGAIVALTMNKGLELHEYAPREVKYVLTGKGSAGKEQVSYMARHFLNIQEPIKPYDVTDALGIALCDLLCDAKGGSPRRGSGSRKSARGGWEDFVRTNPELIV.

Catalysis depends on residues Asp-7, Glu-67, and Asp-140. Mg(2+) is bound by residues Asp-7, Glu-67, and Asp-140.

Belongs to the RuvC family. As to quaternary structure, homodimer which binds Holliday junction (HJ) DNA. The HJ becomes 2-fold symmetrical on binding to RuvC with unstacked arms; it has a different conformation from HJ DNA in complex with RuvA. In the full resolvosome a probable DNA-RuvA(4)-RuvB(12)-RuvC(2) complex forms which resolves the HJ. Mg(2+) is required as a cofactor.

It is found in the cytoplasm. The catalysed reaction is Endonucleolytic cleavage at a junction such as a reciprocal single-stranded crossover between two homologous DNA duplexes (Holliday junction).. Its function is as follows. The RuvA-RuvB-RuvC complex processes Holliday junction (HJ) DNA during genetic recombination and DNA repair. Endonuclease that resolves HJ intermediates. Cleaves cruciform DNA by making single-stranded nicks across the HJ at symmetrical positions within the homologous arms, yielding a 5'-phosphate and a 3'-hydroxyl group; requires a central core of homology in the junction. The consensus cleavage sequence is 5'-(A/T)TT(C/G)-3'. Cleavage occurs on the 3'-side of the TT dinucleotide at the point of strand exchange. HJ branch migration catalyzed by RuvA-RuvB allows RuvC to scan DNA until it finds its consensus sequence, where it cleaves and resolves the cruciform DNA. In Prosthecochloris aestuarii (strain DSM 271 / SK 413), this protein is Crossover junction endodeoxyribonuclease RuvC.